Reading from the N-terminus, the 642-residue chain is Kelch-like protein 17 (642 aa).

The interval 1–53 is disordered; that stretch reads MQPRSERPAGRTQSPEHGSPGPGPEAPPPPPPQPPAPEAERTRPRQARPAAPM. A compositionally biased stretch (pro residues) spans 21–37; sequence GPGPEAPPPPPPQPPAP. Residues 92–159 form the BTB domain; sequence CDIVLHVAAK…AYTAEIVVGE (68 aa). The BACK domain maps to 194–296; the sequence is CLGIRGFADA…SRDFLLGHVD (103 aa). An interaction with F-actin region spans residues 289-641; it reads DFLLGHVDAE…SPTLSVSSTS (353 aa). Kelch repeat units lie at residues 343–389, 390–436, 438–483, 484–530, 532–577, and 578–624; these read VLFA…AVGN, RLYA…ALHG, LYSA…TLDG, NLYA…VLEG, LYVA…AMDG, and WLYA…VLEL. The interaction with PDZK1 stretch occupies residues 640 to 642; the sequence is TSL.

In terms of assembly, interacts with F-actin; the interaction disrupts the F-actin structures and leads to marked changes of neuronal morphology. Component of a complex, composed of PDZK1, SYNGAP1, KLHL17 and NMDA receptors. Interacts directly with PDZK1 (via PDZ1 domain); the interaction is important for integrity of actin cytoskeleton structures in neurons. Interacts with DLG4 and SYNGAP1. Interacts (via kelch repeats) with GRIK2 (via C-terminus); the interaction targets GRIK2 for degradation via ubiquitin-proteasome pathway. Interacts with GRIK1. Interacts with (via BTB domain) CUL3; the interaction regulates surface GRIK2 expression.

The protein resides in the postsynaptic density. It is found in the synapse. It functions in the pathway protein modification; protein ubiquitination. Functionally, substrate-recognition component of some cullin-RING-based BCR (BTB-CUL3-RBX1) E3 ubiquitin-protein ligase complexes. The BCR(KLHL17) complex mediates the ubiquitination and subsequent degradation of GLUR6. May play a role in the actin-based neuronal function. The polypeptide is Kelch-like protein 17 (KLHL17) (Homo sapiens (Human)).